The primary structure comprises 553 residues: T-complex protein 1 subunit eta (553 aa).

Glycine 41 is a binding site for ADP. Glycine 41 contacts ATP. Aspartate 92 contacts Mg(2+). ADP-binding residues include glycine 93, threonine 94, threonine 95, serine 96, serine 164, and serine 165. Residue glycine 93 coordinates ATP. Residue serine 96 participates in ATP binding. Residues arginine 398 and glycine 409 each coordinate ATP. 3 residues coordinate ADP: glycine 409, glutamate 494, and arginine 499. Position 499 (arginine 499) interacts with ATP. Positions 523-553 (PRSTVDAPPGGRGRGRGQTPQPLRPRSVALS) are disordered. Positions 539 to 553 (GQTPQPLRPRSVALS) are enriched in low complexity.

In terms of assembly, component of the chaperonin-containing T-complex (TRiC), a hexadecamer composed of two identical back-to-back stacked rings enclosing a protein folding chamber. Each ring is made up of eight different subunits: TCP1/CCT1, CCT2, CCT3, CCT4, CCT5, CCT6A/CCT6, CCT7, CCT8.

The protein resides in the cytoplasm. The catalysed reaction is ATP + H2O = ADP + phosphate + H(+). Functionally, component of the chaperonin-containing T-complex (TRiC), a molecular chaperone complex that assists the folding of actin, tubulin and other proteins upon ATP hydrolysis. The polypeptide is T-complex protein 1 subunit eta (Gallus gallus (Chicken)).